Consider the following 165-residue polypeptide: Large ribosomal subunit protein uL10 (165 aa).

This sequence belongs to the universal ribosomal protein uL10 family. As to quaternary structure, part of the ribosomal stalk of the 50S ribosomal subunit. The N-terminus interacts with L11 and the large rRNA to form the base of the stalk. The C-terminus forms an elongated spine to which L12 dimers bind in a sequential fashion forming a multimeric L10(L12)X complex.

In terms of biological role, forms part of the ribosomal stalk, playing a central role in the interaction of the ribosome with GTP-bound translation factors. The polypeptide is Large ribosomal subunit protein uL10 (Burkholderia thailandensis (strain ATCC 700388 / DSM 13276 / CCUG 48851 / CIP 106301 / E264)).